A 275-amino-acid polypeptide reads, in one-letter code: Rhamnulose-1-phosphate aldolase (275 aa).

Residue glutamate 117 is part of the active site. Zn(2+)-binding residues include histidine 141, histidine 143, and histidine 212.

It belongs to the aldolase class II family. RhaD subfamily. Homotetramer. Requires Zn(2+) as cofactor.

The protein resides in the cytoplasm. The enzyme catalyses L-rhamnulose 1-phosphate = (S)-lactaldehyde + dihydroxyacetone phosphate. It functions in the pathway carbohydrate degradation; L-rhamnose degradation; glycerone phosphate from L-rhamnose: step 3/3. Its function is as follows. Catalyzes the reversible cleavage of L-rhamnulose-1-phosphate to dihydroxyacetone phosphate (DHAP) and L-lactaldehyde. This is Rhamnulose-1-phosphate aldolase from Salmonella heidelberg (strain SL476).